Consider the following 97-residue polypeptide: Co-chaperonin GroES (97 aa).

This sequence belongs to the GroES chaperonin family. Heptamer of 7 subunits arranged in a ring. Interacts with the chaperonin GroEL.

It localises to the cytoplasm. Functionally, together with the chaperonin GroEL, plays an essential role in assisting protein folding. The GroEL-GroES system forms a nano-cage that allows encapsulation of the non-native substrate proteins and provides a physical environment optimized to promote and accelerate protein folding. GroES binds to the apical surface of the GroEL ring, thereby capping the opening of the GroEL channel. The chain is Co-chaperonin GroES from Nocardioides sp. (strain ATCC BAA-499 / JS614).